The primary structure comprises 442 residues: tRNA modification GTPase MnmE (442 aa).

Residues Arg-23, Glu-82, and Lys-121 each contribute to the (6S)-5-formyl-5,6,7,8-tetrahydrofolate site. Residues 215–364 (GTSLILAGKP…VKQALIQWMQ (150 aa)) form the TrmE-type G domain. Residue Asn-225 coordinates K(+). Residues 225-230 (NVGKSS), 244-250 (THIPGTT), 269-272 (DTAG), and 325-328 (NKAD) each bind GTP. Ser-229 lines the Mg(2+) pocket. K(+) contacts are provided by Thr-244, Ile-246, and Thr-249. Residue Thr-250 participates in Mg(2+) binding. Lys-442 is a (6S)-5-formyl-5,6,7,8-tetrahydrofolate binding site.

This sequence belongs to the TRAFAC class TrmE-Era-EngA-EngB-Septin-like GTPase superfamily. TrmE GTPase family. As to quaternary structure, homodimer. Heterotetramer of two MnmE and two MnmG subunits. K(+) serves as cofactor.

Its subcellular location is the cytoplasm. Its function is as follows. Exhibits a very high intrinsic GTPase hydrolysis rate. Involved in the addition of a carboxymethylaminomethyl (cmnm) group at the wobble position (U34) of certain tRNAs, forming tRNA-cmnm(5)s(2)U34. In Chlamydia pneumoniae (Chlamydophila pneumoniae), this protein is tRNA modification GTPase MnmE.